Here is a 465-residue protein sequence, read N- to C-terminus: CUGBP Elav-like family member 3 (465 aa).

RRM domains lie at 7 to 88 and 95 to 175; these read IKLF…PADS and RKLF…FADT. Residues 346-359 show a composition bias toward pro residues; the sequence is PPALVAQQPPPPPQ. A disordered region spans residues 346–379; sequence PPALVAQQPPPPPQQQQQQQQQQQQQQQREGPDG. Over residues 360-373 the composition is skewed to low complexity; it reads QQQQQQQQQQQQQQ. The 79-residue stretch at 380–458 folds into the RRM 3 domain; sequence CNIFIYHLPQ…KRLKVQLKRP (79 aa).

It belongs to the CELF/BRUNOL family. In terms of tissue distribution, expressed in brain.

It is found in the nucleus. The protein localises to the cytoplasm. RNA-binding protein involved in the regulation of pre-mRNA alternative splicing. Mediates exon inclusion and/or exclusion in pre-mRNA that are subject to tissue-specific and developmentally regulated alternative splicing. Specifically activates exon 5 inclusion of cardiac isoforms of TNNT2 during heart remodeling at the juvenile to adult transition. Activates the splicing of MAPT/Tau exon 10. Binds to muscle-specific splicing enhancer (MSE) intronic sites flanking the alternative exon 5 of TNNT2 pre-mRNA. In Homo sapiens (Human), this protein is CUGBP Elav-like family member 3 (CELF3).